The primary structure comprises 411 residues: Glutamate dehydrogenase 2 (411 aa).

K102 is an active-site residue.

Belongs to the Glu/Leu/Phe/Val dehydrogenases family.

It is found in the mitochondrion. The catalysed reaction is L-glutamate + NAD(+) + H2O = 2-oxoglutarate + NH4(+) + NADH + H(+). It carries out the reaction L-glutamate + NADP(+) + H2O = 2-oxoglutarate + NH4(+) + NADPH + H(+). The chain is Glutamate dehydrogenase 2 (GDH2) from Arabidopsis thaliana (Mouse-ear cress).